Here is a 189-residue protein sequence, read N- to C-terminus: Translation initiation factor IF-3 (189 aa).

The protein belongs to the IF-3 family. Monomer.

Its subcellular location is the cytoplasm. Functionally, IF-3 binds to the 30S ribosomal subunit and shifts the equilibrium between 70S ribosomes and their 50S and 30S subunits in favor of the free subunits, thus enhancing the availability of 30S subunits on which protein synthesis initiation begins. This Corynebacterium glutamicum (strain R) protein is Translation initiation factor IF-3.